The primary structure comprises 620 residues: UvrABC system protein C (620 aa).

In terms of domain architecture, GIY-YIG spans 13–92; it reads DKPGVYIMKN…IKKYSPRYNI (80 aa). Residues 204–239 enclose the UVR domain; that stretch reads TSIIKKLKLEMEKAAEELEFEKAAKIRDRILAIELI.

Belongs to the UvrC family. As to quaternary structure, interacts with UvrB in an incision complex.

Its subcellular location is the cytoplasm. Its function is as follows. The UvrABC repair system catalyzes the recognition and processing of DNA lesions. UvrC both incises the 5' and 3' sides of the lesion. The N-terminal half is responsible for the 3' incision and the C-terminal half is responsible for the 5' incision. The polypeptide is UvrABC system protein C (Clostridium perfringens (strain 13 / Type A)).